Reading from the N-terminus, the 513-residue chain is Sulfhydryl oxidase 1 (513 aa).

Residues Met1–Ala30 form the signal peptide. In terms of domain architecture, Thioredoxin spans Arg31–Lys174. Residue Asn51 is glycosylated (N-linked (GlcNAc...) asparagine). Catalysis depends on nucleophile residues Cys76 and Cys79. Cys76 and Cys79 form a disulfide bridge. N-linked (GlcNAc...) asparagine glycosylation is found at Asn193 and Asn266. Cys301 and Cys313 are disulfide-bonded. Positions Ser304–Trp406 constitute an ERV/ALR sulfhydryl oxidase domain. Residues Arg309, Trp316, His320, Glu350, His354, Trp377–Asn384, Lys403, and Trp406 each bind FAD. A disulfide bond links Cys348 and Cys351. An intrachain disulfide couples Cys412 to Cys415.

It depends on FAD as a cofactor.

It localises to the secreted. It catalyses the reaction 2 R'C(R)SH + O2 = R'C(R)S-S(R)CR' + H2O2. Its function is as follows. Catalyzes the oxidation of sulfhydryl groups in peptide and protein thiols to disulfides with the reduction of oxygen to hydrogen peroxide. May contribute to disulfide bond formation in a variety of secreted proteins. The polypeptide is Sulfhydryl oxidase 1 (QSOX1) (Oryza sativa subsp. japonica (Rice)).